Consider the following 316-residue polypeptide: Transcription termination/antitermination protein NusG (316 aa).

It belongs to the NusG family.

Participates in transcription elongation, termination and antitermination. In Mycoplasma genitalium (strain ATCC 33530 / DSM 19775 / NCTC 10195 / G37) (Mycoplasmoides genitalium), this protein is Transcription termination/antitermination protein NusG.